A 422-amino-acid chain; its full sequence is GTPase Obg (422 aa).

An Obg domain is found at 4-161 (LHFVDEAFNE…FKIKTELKVL (158 aa)). Residues 162–327 (ADIGLLGFPS…LKYEMSSLLQ (166 aa)) enclose the OBG-type G domain. GTP is bound by residues 168 to 175 (GFPSVGKS), 193 to 197 (FTTIK), 214 to 217 (DLPG), 281 to 284 (NKMD), and 308 to 310 (SLV). 2 residues coordinate Mg(2+): S175 and T195. Residues 345-422 (TLPDNQNTIS…KICDRLFYFL (78 aa)) enclose the OCT domain.

The protein belongs to the TRAFAC class OBG-HflX-like GTPase superfamily. OBG GTPase family. As to quaternary structure, monomer. Mg(2+) is required as a cofactor.

It localises to the cytoplasm. In terms of biological role, an essential GTPase which binds GTP, GDP and possibly (p)ppGpp with moderate affinity, with high nucleotide exchange rates and a fairly low GTP hydrolysis rate. Plays a role in control of the cell cycle, stress response, ribosome biogenesis and in those bacteria that undergo differentiation, in morphogenesis control. The polypeptide is GTPase Obg (Onion yellows phytoplasma (strain OY-M)).